Here is a 159-residue protein sequence, read N- to C-terminus: Ribosomal RNA large subunit methyltransferase H (159 aa).

S-adenosyl-L-methionine contacts are provided by residues Leu-76, Gly-108, and 127-132; that span reads FGRLTL.

This sequence belongs to the RNA methyltransferase RlmH family. In terms of assembly, homodimer.

It is found in the cytoplasm. The catalysed reaction is pseudouridine(1915) in 23S rRNA + S-adenosyl-L-methionine = N(3)-methylpseudouridine(1915) in 23S rRNA + S-adenosyl-L-homocysteine + H(+). Its function is as follows. Specifically methylates the pseudouridine at position 1915 (m3Psi1915) in 23S rRNA. This Streptococcus uberis (strain ATCC BAA-854 / 0140J) protein is Ribosomal RNA large subunit methyltransferase H.